Reading from the N-terminus, the 249-residue chain is Exosome complex component Rrp4 (249 aa).

Residues 72–143 (GDTIIGLVED…RTISPVLTVK (72 aa)) form the S1 motif domain. In terms of domain architecture, KH spans 151-213 (PLGTVMDIMP…EALIEAINII (63 aa)).

The protein belongs to the RRP4 family. In terms of assembly, component of the archaeal exosome complex. Forms a trimer of Rrp4 and/or Csl4 subunits. The trimer associates with a hexameric ring-like arrangement composed of 3 Rrp41-Rrp42 heterodimers.

It is found in the cytoplasm. Its function is as follows. Non-catalytic component of the exosome, which is a complex involved in RNA degradation. Increases the RNA binding and the efficiency of RNA degradation. Confers strong poly(A) specificity to the exosome. The chain is Exosome complex component Rrp4 from Sulfolobus acidocaldarius (strain ATCC 33909 / DSM 639 / JCM 8929 / NBRC 15157 / NCIMB 11770).